The chain runs to 412 residues: Argininosuccinate synthase (412 aa).

ATP is bound by residues Ala24–Ser32 and Ala50. Residues Tyr103 and Ser108 each contribute to the L-citrulline site. ATP is bound at residue Gly132. L-aspartate-binding residues include Thr134, Asn138, and Asp139. Asn138 is a binding site for L-citrulline. Arg142 lines the L-citrulline pocket.

Belongs to the argininosuccinate synthase family. Type 1 subfamily. Homotetramer.

Its subcellular location is the cytoplasm. The enzyme catalyses L-citrulline + L-aspartate + ATP = 2-(N(omega)-L-arginino)succinate + AMP + diphosphate + H(+). The protein operates within amino-acid biosynthesis; L-arginine biosynthesis; L-arginine from L-ornithine and carbamoyl phosphate: step 2/3. The protein is Argininosuccinate synthase of Xanthomonas axonopodis pv. citri (strain 306).